The following is a 71-amino-acid chain: MSFGTRLLLFLILTLPLVTSSSPNTLHVSGIVKTGTTSRFLMMTIEDYDDPSANTRHDPSVPTNAKADTTP.

Positions 1–20 (MSFGTRLLLFLILTLPLVTS) are cleaved as a signal peptide. A propeptide spanning residues 21–46 (SSPNTLHVSGIVKTGTTSRFLMMTIE) is cleaved from the precursor. Tyrosine 48 is modified (sulfotyrosine). The interval 50–71 (DPSANTRHDPSVPTNAKADTTP) is disordered. The span at 61–71 (VPTNAKADTTP) shows a compositional bias: polar residues. Proline 62 is subject to 4-hydroxyproline. Proline 62 is a glycosylation site (O-linked (Ara...) hydroxyproline). Residues 65–71 (AKADTTP) constitute a propeptide that is removed on maturation.

It belongs to the sulfated-peptide plant hormone family. In terms of processing, the sulfation and the glycosylation are required for full activity.

Its subcellular location is the secreted. Functionally, promotes cellular proliferation and expansion. The chain is Protein PSY2 (PSY2) from Arabidopsis thaliana (Mouse-ear cress).